Reading from the N-terminus, the 477-residue chain is Glutamate--tRNA ligase (477 aa).

The 'HIGH' region motif lies at 8-18 (PSPTGTLHIGT). Residues 247-251 (KLSKR) carry the 'KMSKS' region motif. Lysine 250 is a binding site for ATP.

The protein belongs to the class-I aminoacyl-tRNA synthetase family. Glutamate--tRNA ligase type 1 subfamily. Monomer.

It localises to the cytoplasm. It carries out the reaction tRNA(Glu) + L-glutamate + ATP = L-glutamyl-tRNA(Glu) + AMP + diphosphate. In terms of biological role, catalyzes the attachment of glutamate to tRNA(Glu) in a two-step reaction: glutamate is first activated by ATP to form Glu-AMP and then transferred to the acceptor end of tRNA(Glu). The polypeptide is Glutamate--tRNA ligase (Synechococcus sp. (strain CC9902)).